We begin with the raw amino-acid sequence, 507 residues long: Methionine--tRNA ligase (507 aa).

The short motif at 12–22 (YYVNDVSHIGH) is the 'HIGH' region element. The short motif at 295–299 (KISKS) is the 'KMSKS' region element. ATP is bound at residue Lys298.

The protein belongs to the class-I aminoacyl-tRNA synthetase family. MetG type 2B subfamily. As to quaternary structure, monomer.

The protein resides in the cytoplasm. The catalysed reaction is tRNA(Met) + L-methionine + ATP = L-methionyl-tRNA(Met) + AMP + diphosphate. Functionally, is required not only for elongation of protein synthesis but also for the initiation of all mRNA translation through initiator tRNA(fMet) aminoacylation. The sequence is that of Methionine--tRNA ligase from Rickettsia typhi (strain ATCC VR-144 / Wilmington).